Here is a 632-residue protein sequence, read N- to C-terminus: Golgin subfamily A member 8O (632 aa).

The segment at methionine 1–glutamate 76 is disordered. A compositionally biased stretch (polar residues) spans threonine 38–glycine 50. Coiled-coil stretches lie at residues valine 85–tyrosine 150 and glutamate 209–alanine 421. Disordered regions lie at residues proline 423–serine 452, aspartate 505–glutamate 524, and asparagine 552–glycine 612. Basic and acidic residues predominate over residues histidine 427–proline 440. Positions leucine 508–glycine 520 are enriched in gly residues. Over residues alanine 569 to glutamate 578 the composition is skewed to basic and acidic residues.

This sequence belongs to the GOLGA6 family.

The sequence is that of Golgin subfamily A member 8O (GOLGA8O) from Homo sapiens (Human).